Consider the following 427-residue polypeptide: Serine--tRNA ligase (427 aa).

Residue 231-233 (TAE) coordinates L-serine. An ATP-binding site is contributed by 262–264 (RSE). An L-serine-binding site is contributed by glutamate 285. An ATP-binding site is contributed by 349–352 (EISS). Residue serine 385 participates in L-serine binding.

Belongs to the class-II aminoacyl-tRNA synthetase family. Type-1 seryl-tRNA synthetase subfamily. Homodimer. The tRNA molecule binds across the dimer.

Its subcellular location is the cytoplasm. It catalyses the reaction tRNA(Ser) + L-serine + ATP = L-seryl-tRNA(Ser) + AMP + diphosphate + H(+). The enzyme catalyses tRNA(Sec) + L-serine + ATP = L-seryl-tRNA(Sec) + AMP + diphosphate + H(+). It functions in the pathway aminoacyl-tRNA biosynthesis; selenocysteinyl-tRNA(Sec) biosynthesis; L-seryl-tRNA(Sec) from L-serine and tRNA(Sec): step 1/1. Functionally, catalyzes the attachment of serine to tRNA(Ser). Is also able to aminoacylate tRNA(Sec) with serine, to form the misacylated tRNA L-seryl-tRNA(Sec), which will be further converted into selenocysteinyl-tRNA(Sec). This Rhizobium rhizogenes (strain K84 / ATCC BAA-868) (Agrobacterium radiobacter) protein is Serine--tRNA ligase.